Here is a 589-residue protein sequence, read N- to C-terminus: MATISNETPLWRLQQTLNHILPQSVRKNEKHLAVVHGPTQPALWEMTLGELLEFQCLRYRDLEAVVVPWTAARWTYGQLENESSHLARGLLAKGIQRGDRIGVMAGNCEEYVSLFFAAARVGAILVVINNTYTDAELKYALSHTACKLLFIVPRIGRHDLKNALEDLHSPDISKRLPNLNETVMIQGSFKSFGTYKDVILAGNVVPLSAVQRRQDTLSPFDVCNLQFTSGSTGNPKASMLTHHNLINNSRFIGDRMDFTEYDILCCPPPLFHCFGLVLGLLACITHGAKVVYPAETFDPEAVLRAISDERCTALHGVPTMFEAILALSRPDSFDCSQLRTGIIAGAPVPRPLMKRLWNELNMTEFTSSYGLTEASPTCFNAFTSDSIATRLTTVGKVLPHASAKIINPETGETVKIGERGELCMSGYQIHKGYWGNLEKTAEALIEDEDGTIWLRTGDEAVFNSDGYCTITGRFKDIIIRGGENIYPLEIEERLTAHPAISRAAVVGLPNKHYGEIVGAFLVLEPGHTCPPDDEIKNWTRQTLGRHKAPKHVFVFGLDPRLPLDMPQTGSGKIQKQVLRDLGKRLVGEE.

Positions 12–20 match the PTS2-type peroxisomal targeting signal motif; it reads RLQQTLNHI. Residues 228–236, 367–372, Asp-458, and Arg-473 each bind ATP; these read TSGSTGNPK and SSYGLT. Thr-372 lines the substrate pocket. CoA contacts are provided by residues 481-483, Lys-547, and 555-557; these read GGE and FGL. ATP is bound at residue Lys-572.

This sequence belongs to the ATP-dependent AMP-binding enzyme family.

Its subcellular location is the peroxisome. Its pathway is siderophore biosynthesis. In terms of biological role, acyl-CoA ligase; part of the gene cluster that mediates the biosynthesis of hydroxamate-containing siderophores that play a critical role in virulence via intracellular iron acquisition during macrophage infection. The polypeptide is Acyl-CoA ligase SID4 (Ajellomyces capsulatus (Darling's disease fungus)).